Here is a 1456-residue protein sequence, read N- to C-terminus: Alpha-2-macroglobulin-like protein 1 (1456 aa).

Positions 1–19 (MVPTILLSALLLHFTDVVA) are cleaved as a signal peptide. N-linked (GlcNAc...) asparagine glycans are attached at residues Asn-48, Asn-172, and Asn-868.

Belongs to the protease inhibitor I39 (alpha-2-macroglobulin) family. In terms of assembly, homotetramer; consists of two dimer pairs that are disulfide-linked. Part of a complex composed of complement component C3, CLCA1/CLCA3, A2ML1/OH and ALB/serum albumin.

Its subcellular location is the secreted. In terms of biological role, inhibits protease gelatinolytic complex activity against type 1 collagen. In Mus musculus (Mouse), this protein is Alpha-2-macroglobulin-like protein 1.